A 548-amino-acid polypeptide reads, in one-letter code: Chaperonin GroEL (548 aa).

Residues 30 to 33, Lys51, 87 to 91, Gly415, 479 to 481, and Asp495 each bind ATP; these read TLGP, DGTTT, and NAA.

This sequence belongs to the chaperonin (HSP60) family. As to quaternary structure, forms a cylinder of 14 subunits composed of two heptameric rings stacked back-to-back. Interacts with the co-chaperonin GroES.

It is found in the cytoplasm. The catalysed reaction is ATP + H2O + a folded polypeptide = ADP + phosphate + an unfolded polypeptide.. In terms of biological role, together with its co-chaperonin GroES, plays an essential role in assisting protein folding. The GroEL-GroES system forms a nano-cage that allows encapsulation of the non-native substrate proteins and provides a physical environment optimized to promote and accelerate protein folding. This chain is Chaperonin GroEL, found in Salmonella gallinarum (strain 287/91 / NCTC 13346).